The primary structure comprises 564 residues: Arrestin domain-containing protein E (564 aa).

Residues 74 to 146 are compositionally biased toward low complexity; that stretch reads SQQPQSSQPS…NTSNGFSPPN (73 aa). Disordered stretches follow at residues 74–150 and 245–286; these read SQQP…LNKN and ASQP…SFPS. Pro residues predominate over residues 250-259; it reads PQQPQQPQPQ. Residues 260 to 269 are compositionally biased toward low complexity; that stretch reads QPQQQQFQQQ. Residues 270–285 show a composition bias toward polar residues; the sequence is SYNNNNSTQSMLSSFP. One can recognise an LIM zinc-binding domain in the interval 348–413; it reads DKCAACDALL…PMCFESTTGL (66 aa).

The chain is Arrestin domain-containing protein E (adcE) from Dictyostelium discoideum (Social amoeba).